Here is a 1173-residue protein sequence, read N- to C-terminus: Inner capsid protein VP3 (1173 aa).

A disordered region spans residues 1-53 (MSNLPKPASHFEPEKNVDDKGNVTGSAPPVSKDTPTQQASVSLPNQEEPTQQT). The span at 9–21 (SHFEPEKNVDDKG) shows a compositional bias: basic and acidic residues. Polar residues predominate over residues 33–53 (DTPTQQASVSLPNQEEPTQQT).

Belongs to the turreted BTV-fold inner capsid family. Homodecamer; each decamer is made up of two conformers of VP2, called VP2A and VP2B. 12 homodecamers assemble to form an icosahedral capsid.

It localises to the virion. Functionally, inner capsid protein that self-assembles to form an icosahedral capsid with a T=2 symmetry, which consists of 120 copies of VP2, with channels at each of its five-fold vertices. This capsid constitutes the innermost concentric layer of the viral mature particle. In Rice ragged stunt virus (isolate Thailand) (RRSV), this protein is Inner capsid protein VP3.